The following is a 316-amino-acid chain: tRNA-dihydrouridine(16) synthase (316 aa).

Residues 7–9 and Q68 each bind FMN; that span reads PME. The active-site Proton donor is C98. FMN contacts are provided by residues K139, 200–202, and 224–225; these read NGE and GR.

This sequence belongs to the Dus family. DusC subfamily. FMN is required as a cofactor.

The catalysed reaction is 5,6-dihydrouridine(16) in tRNA + NADP(+) = uridine(16) in tRNA + NADPH + H(+). The enzyme catalyses 5,6-dihydrouridine(16) in tRNA + NAD(+) = uridine(16) in tRNA + NADH + H(+). Functionally, catalyzes the synthesis of 5,6-dihydrouridine (D), a modified base found in the D-loop of most tRNAs, via the reduction of the C5-C6 double bond in target uridines. Specifically modifies U16 in tRNAs. The protein is tRNA-dihydrouridine(16) synthase of Escherichia coli O157:H7.